Consider the following 414-residue polypeptide: Isocitrate dehydrogenase [NADP] cytoplasmic (414 aa).

An N-acetylserine modification is found at Ser2. Position 42 is a phosphotyrosine (Tyr42). Residue 75 to 77 (TIT) participates in NADP(+) binding. Position 77 (Thr77) interacts with substrate. Lys81 bears the N6-acetyllysine mark. Arg82 provides a ligand contact to NADP(+). Residues 94 to 100 (SPNGTIR) and Arg109 each bind substrate. Lys126 is modified (N6-succinyllysine). Residues Arg132 and Lys212 each coordinate substrate. N6-acetyllysine is present on residues Lys224, Lys233, and Lys243. Asp252 lines the Mn(2+) pocket. Residue Lys260 coordinates NADP(+). The Mn(2+) site is built by Asp275 and Asp279. 310 to 315 (GTVTRH) contacts NADP(+). At Lys321 the chain carries N6-acetyllysine. Asn328 lines the NADP(+) pocket. Ser389 is modified (phosphoserine). Position 400 is an N6-succinyllysine (Lys400).

The protein belongs to the isocitrate and isopropylmalate dehydrogenases family. Homodimer. Requires Mg(2+) as cofactor. The cofactor is Mn(2+). Post-translationally, the N-terminus is blocked. In terms of processing, acetylation at Lys-374 dramatically reduces catalytic activity. Ubiquitous.

It is found in the cytoplasm. The protein localises to the cytosol. It localises to the peroxisome. The enzyme catalyses D-threo-isocitrate + NADP(+) = 2-oxoglutarate + CO2 + NADPH. Its function is as follows. Catalyzes the NADP(+)-dependent oxidative decarboxylation of isocitrate (D-threo-isocitrate) to 2-ketoglutarate (2-oxoglutarate), which is required by other enzymes such as the phytanoyl-CoA dioxygenase. Plays a critical role in the generation of NADPH, an important cofactor in many biosynthesis pathways. May act as a corneal epithelial crystallin and may be involved in maintaining corneal epithelial transparency. The protein is Isocitrate dehydrogenase [NADP] cytoplasmic (Idh1) of Rattus norvegicus (Rat).